Reading from the N-terminus, the 415-residue chain is Histidine--tRNA ligase (415 aa).

It belongs to the class-II aminoacyl-tRNA synthetase family. As to quaternary structure, homodimer.

It is found in the cytoplasm. The enzyme catalyses tRNA(His) + L-histidine + ATP = L-histidyl-tRNA(His) + AMP + diphosphate + H(+). The sequence is that of Histidine--tRNA ligase from Gluconobacter oxydans (strain 621H) (Gluconobacter suboxydans).